The chain runs to 352 residues: Threonine synthase (352 aa).

N6-(pyridoxal phosphate)lysine is present on K59. Pyridoxal 5'-phosphate is bound by residues N85, 185–189 (GNAGN), and T314.

The protein belongs to the threonine synthase family. Requires pyridoxal 5'-phosphate as cofactor.

It catalyses the reaction O-phospho-L-homoserine + H2O = L-threonine + phosphate. The protein operates within amino-acid biosynthesis; L-threonine biosynthesis; L-threonine from L-aspartate: step 5/5. Its function is as follows. Catalyzes the gamma-elimination of phosphate from L-phosphohomoserine and the beta-addition of water to produce L-threonine. The sequence is that of Threonine synthase (thrC) from Bacillus subtilis (strain 168).